The primary structure comprises 466 residues: Soluble pyridine nucleotide transhydrogenase (466 aa).

Glutamate 36–cysteine 45 lines the FAD pocket.

It belongs to the class-I pyridine nucleotide-disulfide oxidoreductase family. It depends on FAD as a cofactor.

It is found in the cytoplasm. The catalysed reaction is NAD(+) + NADPH = NADH + NADP(+). Conversion of NADPH, generated by peripheral catabolic pathways, to NADH, which can enter the respiratory chain for energy generation. This Yersinia pseudotuberculosis serotype O:1b (strain IP 31758) protein is Soluble pyridine nucleotide transhydrogenase.